The chain runs to 360 residues: MTIKIAVLPGDGIGPEIVAEALKVLDCLRSDFGLAVETEHALIGGAAYDAHGTPFPKETLELCRAADSILLGAVGGPKWEPLDYSLRPERGLLGLRSELELFSNLRPAVLYPQLVSASTLKPEVVAGLDIMIVRELTGGIYFGKPRGRRINEDGEREGYNTLVYSESEIRRIAHSAFQIARKRNRRLCSIDKANVLECTELWREVVIEVGKDYPDVALSHMYVDNAAMQLVRNPKQFDVMLTDNMFGDILSDCAAMLTGSIGMLPSASLAESGKGMYEPIHGSAPDIAGRGIANPIATILSLAMMLRYSFDDAVSAERIGKAVQTALDQGFRTADIASEGTVEVGTAAMGDAIVAALRAV.

Residue 76–89 (GPKWEPLDYSLRPE) coordinates NAD(+). Residues Arg-96, Arg-106, Arg-134, and Asp-224 each coordinate substrate. 3 residues coordinate Mg(2+): Asp-224, Asp-248, and Asp-252. Residue 282–294 (GSAPDIAGRGIAN) participates in NAD(+) binding.

It belongs to the isocitrate and isopropylmalate dehydrogenases family. LeuB type 1 subfamily. In terms of assembly, homodimer. Requires Mg(2+) as cofactor. The cofactor is Mn(2+).

The protein localises to the cytoplasm. It carries out the reaction (2R,3S)-3-isopropylmalate + NAD(+) = 4-methyl-2-oxopentanoate + CO2 + NADH. It participates in amino-acid biosynthesis; L-leucine biosynthesis; L-leucine from 3-methyl-2-oxobutanoate: step 3/4. Its function is as follows. Catalyzes the oxidation of 3-carboxy-2-hydroxy-4-methylpentanoate (3-isopropylmalate) to 3-carboxy-4-methyl-2-oxopentanoate. The product decarboxylates to 4-methyl-2 oxopentanoate. This is 3-isopropylmalate dehydrogenase from Methylococcus capsulatus (strain ATCC 33009 / NCIMB 11132 / Bath).